The primary structure comprises 1465 residues: Gag-Pol polyprotein (1465 aa).

The N-myristoyl glycine; by host moiety is linked to residue Gly2. Residues 16–22 (FEHIRLR) carry the Nuclear export signal motif. Positions 26-32 (KKKYQIK) match the Nuclear localization signal motif. Residues 116–144 (NAERNTTETSSGQKKNDKGVTVPPGGSQN) are disordered. CCHC-type zinc fingers lie at residues 402-419 (VKCY…QCPE) and 423-440 (MRCL…DCRG). The Peptidase A2 domain occupies 532-603 (IRALLDTGAD…TPINIIGRNI (72 aa)). The active-site For protease activity; shared with dimeric partner is the Asp537. Positions 659-849 (EGKISKIGGE…PPYEWMGYKL (191 aa)) constitute a Reverse transcriptase domain. Mg(2+)-binding residues include Asp725, Asp800, and Asp801. Residues 842-850 (YEWMGYKLW) are RT 'primer grip'. The short motif at 1012–1028 (WEQWWADYWQVSWIPDW) is the Tryptophan repeat motif element. An RNase H type-1 domain is found at 1048-1171 (IPKEDVYYVD…IDKLVSQGMR (124 aa)). Residues Asp1057, Glu1092, Asp1112, and Asp1163 each contribute to the Mg(2+) site. Residues 1177-1218 (EKIEEAQEEHERYHNNWRNLADTYGLPQIVAKEIVAMCPKCQ) form an Integrase-type zinc finger. The Zn(2+) site is built by His1186, His1190, Cys1214, and Cys1217. Residues 1228 to 1378 (VDASPGVWQM…TPAERLINMI (151 aa)) enclose the Integrase catalytic domain. Mg(2+) contacts are provided by Asp1238 and Asp1290. The integrase-type DNA-binding region spans 1397–1444 (FRVYYREGRDPVWKGPGQLIWKGEGAVVIKGGVELKEYPRRKAKIIKD).

As to quaternary structure, homotrimer. Interacts with gp41 (via C-terminus). Homodimer. The active site consists of two apposed aspartic acid residues. In terms of assembly, heterodimer of p66 RT and p51 RT (RT p66/p51). Heterodimerization of RT is essential for DNA polymerase activity. Despite the sequence identities, p66 RT and p51 RT have distinct folding. As to quaternary structure, homotetramer; may further associate as a homohexadecamer. The cofactor is Mg(2+). Post-translationally, specific enzymatic cleavages by the viral protease yield mature proteins. The protease is released by autocatalytic cleavage. The polyprotein is cleaved during and after budding, this process is termed maturation. Proteolytic cleavage of p66 RT removes the RNase H domain to yield the p51 RT subunit. In terms of processing, capsid protein p24 is phosphorylated.

The protein resides in the virion. It is found in the host nucleus. The protein localises to the host cytoplasm. It localises to the host cell membrane. It catalyses the reaction Specific for a P1 residue that is hydrophobic, and P1' variable, but often Pro.. The enzyme catalyses Endohydrolysis of RNA in RNA/DNA hybrids. Three different cleavage modes: 1. sequence-specific internal cleavage of RNA. Human immunodeficiency virus type 1 and Moloney murine leukemia virus enzymes prefer to cleave the RNA strand one nucleotide away from the RNA-DNA junction. 2. RNA 5'-end directed cleavage 13-19 nucleotides from the RNA end. 3. DNA 3'-end directed cleavage 15-20 nucleotides away from the primer terminus.. It carries out the reaction 3'-end directed exonucleolytic cleavage of viral RNA-DNA hybrid.. The catalysed reaction is DNA(n) + a 2'-deoxyribonucleoside 5'-triphosphate = DNA(n+1) + diphosphate. Its activity is regulated as follows. The viral protease is inhibited by many synthetic protease inhibitors (PIs), such as amprenavir, atazanavir, indinavir, loprinavir, nelfinavir, ritonavir and saquinavir. RT can be inhibited either by nucleoside RT inhibitors (NRTIs) or by non nucleoside RT inhibitors (NNRTIs). NRTIs act as chain terminators, whereas NNRTIs inhibit DNA polymerization by binding a small hydrophobic pocket near the RT active site and inducing an allosteric change in this region. Classical NRTIs are abacavir, adefovir (PMEA), didanosine (ddI), lamivudine (3TC), stavudine (d4T), tenofovir (PMPA), zalcitabine (ddC), and zidovudine (AZT). Classical NNRTIs are atevirdine (BHAP U-87201E), delavirdine, efavirenz (DMP-266), emivirine (I-EBU), and nevirapine (BI-RG-587). The tritherapies used as a basic effective treatment of AIDS associate two NRTIs and one NNRTI. Use of protease inhibitors in tritherapy regimens permit more ambitious therapeutic strategies. Gag-Pol polyprotein and Gag polyprotein may regulate their own translation, by the binding genomic RNA in the 5'-UTR. At low concentration, Gag-Pol and Gag would promote translation, whereas at high concentration, the polyproteins encapsidate genomic RNA and then shut off translation. In terms of biological role, matrix protein p17 has two main functions: in infected cell, it targets Gag and Gag-pol polyproteins to the plasma membrane via a multipartite membrane-binding signal, that includes its myristointegration complex. The myristoylation signal and the NLS exert conflicting influences its subcellular localization. The key regulation of these motifs might be phosphorylation of a portion of MA molecules on the C-terminal tyrosine at the time of virus maturation, by virion-associated cellular tyrosine kinase. Implicated in the release from host cell mediated by Vpu. Its function is as follows. Capsid protein p24 forms the conical core that encapsulates the genomic RNA-nucleocapsid complex in the virion. The core is constituted by capsid protein hexamer subunits. The core is disassembled soon after virion entry. Interaction with host PPIA/CYPA protects the virus from restriction by host TRIM5-alpha and from an unknown antiviral activity in host cells. This capsid restriction by TRIM5 is one of the factors which restricts SIV to the simian species. Functionally, nucleocapsid protein p7 encapsulates and protects viral dimeric unspliced (genomic) RNA. Binds these RNAs through its zinc fingers. Facilitates rearangement of nucleic acid secondary structure during retrotranscription of genomic RNA. This capability is referred to as nucleic acid chaperone activity. The aspartyl protease mediates proteolytic cleavages of Gag and Gag-Pol polyproteins during or shortly after the release of the virion from the plasma membrane. Cleavages take place as an ordered, step-wise cascade to yield mature proteins. This process is called maturation. Displays maximal activity during the budding process just prior to particle release from the cell. Also cleaves Nef and Vif, probably concomitantly with viral structural proteins on maturation of virus particles. Hydrolyzes host EIF4GI and PABP1 in order to shut off the capped cellular mRNA translation. The resulting inhibition of cellular protein synthesis serves to ensure maximal viral gene expression and to evade host immune response. In terms of biological role, reverse transcriptase/ribonuclease H (RT) is a multifunctional enzyme that converts the viral dimeric RNA genome into dsDNA in the cytoplasm, shortly after virus entry into the cell. This enzyme displays a DNA polymerase activity that can copy either DNA or RNA templates, and a ribonuclease H (RNase H) activity that cleaves the RNA strand of RNA-DNA heteroduplexes in a partially processive 3' to 5' endonucleasic mode. Conversion of viral genomic RNA into dsDNA requires many steps. A tRNA binds to the primer-binding site (PBS) situated at the 5'-end of the viral RNA. RT uses the 3' end of the tRNA primer to perform a short round of RNA-dependent minus-strand DNA synthesis. The reading proceeds through the U5 region and ends after the repeated (R) region which is present at both ends of viral RNA. The portion of the RNA-DNA heteroduplex is digested by the RNase H, resulting in a ssDNA product attached to the tRNA primer. This ssDNA/tRNA hybridizes with the identical R region situated at the 3' end of viral RNA. This template exchange, known as minus-strand DNA strong stop transfer, can be either intra- or intermolecular. RT uses the 3' end of this newly synthesized short ssDNA to perform the RNA-dependent minus-strand DNA synthesis of the whole template. RNase H digests the RNA template except for two polypurine tracts (PPTs) situated at the 5'-end and near the center of the genome. It is not clear if both polymerase and RNase H activities are simultaneous. RNase H can probably proceed both in a polymerase-dependent (RNA cut into small fragments by the same RT performing DNA synthesis) and a polymerase-independent mode (cleavage of remaining RNA fragments by free RTs). Secondly, RT performs DNA-directed plus-strand DNA synthesis using the PPTs that have not been removed by RNase H as primers. PPTs and tRNA primers are then removed by RNase H. The 3' and 5' ssDNA PBS regions hybridize to form a circular dsDNA intermediate. Strand displacement synthesis by RT to the PBS and PPT ends produces a blunt ended, linear dsDNA copy of the viral genome that includes long terminal repeats (LTRs) at both ends. Its function is as follows. Integrase catalyzes viral DNA integration into the host chromosome, by performing a series of DNA cutting and joining reactions. This enzyme activity takes place after virion entry into a cell and reverse transcription of the RNA genome in dsDNA. The first step in the integration process is 3' processing. This step requires a complex comprising the viral genome, matrix protein, Vpr and integrase. This complex is called the pre-integration complex (PIC). The integrase protein removes 2 nucleotides from each 3' end of the viral DNA, leaving recessed CA OH's at the 3' ends. In the second step, the PIC enters cell nucleus. This process is mediated through integrase and Vpr proteins, and allows the virus to infect a non dividing cell. This ability to enter the nucleus is specific of lentiviruses, other retroviruses cannot and rely on cell division to access cell chromosomes. In the third step, termed strand transfer, the integrase protein joins the previously processed 3' ends to the 5' ends of strands of target cellular DNA at the site of integration. The 5'-ends are produced by integrase-catalyzed staggered cuts, 5 bp apart. A Y-shaped, gapped, recombination intermediate results, with the 5'-ends of the viral DNA strands and the 3' ends of target DNA strands remaining unjoined, flanking a gap of 5 bp. The last step is viral DNA integration into host chromosome. This involves host DNA repair synthesis in which the 5 bp gaps between the unjoined strands are filled in and then ligated. Since this process occurs at both cuts flanking the SIV genome, a 5 bp duplication of host DNA is produced at the ends of SIV integration. Alternatively, Integrase may catalyze the excision of viral DNA just after strand transfer, this is termed disintegration. The sequence is that of Gag-Pol polyprotein (gag-pol) from Cercopithecidae (Old World monkeys).